Here is a 151-residue protein sequence, read N- to C-terminus: Cyanate hydratase (151 aa).

Active-site residues include R92, E95, and S118.

It belongs to the cyanase family.

It carries out the reaction cyanate + hydrogencarbonate + 3 H(+) = NH4(+) + 2 CO2. Functionally, catalyzes the reaction of cyanate with bicarbonate to produce ammonia and carbon dioxide. This chain is Cyanate hydratase, found in Coprinopsis cinerea (strain Okayama-7 / 130 / ATCC MYA-4618 / FGSC 9003) (Inky cap fungus).